Consider the following 491-residue polypeptide: UDP-glycosyltransferase 73C1 (491 aa).

UDP-alpha-D-glucose is bound by residues Ser-292, 352–354, 369–377, and 391–394; these read SPQ, HCGWNSTLE, and FGDQ.

This sequence belongs to the UDP-glycosyltransferase family.

In terms of biological role, involved in the O-glucosylation of trans-zeatin and dihydrozeatin. Also active in vitro on cis-zeatin, dihydrozeatin-9-N-Glc, and olomoucine. Can detoxify the explosive 2,4,6-trinitrotoluene in plant by forming O- or C-glucose conjugates. This Arabidopsis thaliana (Mouse-ear cress) protein is UDP-glycosyltransferase 73C1 (UGT73C1).